We begin with the raw amino-acid sequence, 480 residues long: Sulfate adenylyltransferase subunit 1 (480 aa).

The tr-type G domain occupies 30–248 (KGLLRFLTCG…TVDVKKEASK (219 aa)). The interval 39–46 (GSVDDGKS) is G1. 39–46 (GSVDDGKS) contributes to the GTP binding site. A G2 region spans residues 97–101 (GITID). The interval 118–121 (DTPG) is G3. Residues 118 to 122 (DTPGH) and 173 to 176 (NKMD) contribute to the GTP site. The segment at 173–176 (NKMD) is G4. Residues 211–213 (SAL) are G5.

It belongs to the TRAFAC class translation factor GTPase superfamily. Classic translation factor GTPase family. CysN/NodQ subfamily. As to quaternary structure, heterodimer composed of CysD, the smaller subunit, and CysN.

The catalysed reaction is sulfate + ATP + H(+) = adenosine 5'-phosphosulfate + diphosphate. Its pathway is sulfur metabolism; hydrogen sulfide biosynthesis; sulfite from sulfate: step 1/3. With CysD forms the ATP sulfurylase (ATPS) that catalyzes the adenylation of sulfate producing adenosine 5'-phosphosulfate (APS) and diphosphate, the first enzymatic step in sulfur assimilation pathway. APS synthesis involves the formation of a high-energy phosphoric-sulfuric acid anhydride bond driven by GTP hydrolysis by CysN coupled to ATP hydrolysis by CysD. The protein is Sulfate adenylyltransferase subunit 1 of Photorhabdus laumondii subsp. laumondii (strain DSM 15139 / CIP 105565 / TT01) (Photorhabdus luminescens subsp. laumondii).